Consider the following 100-residue polypeptide: Urease subunit gamma (100 aa).

It belongs to the urease gamma subunit family. Heterotrimer of UreA (gamma), UreB (beta) and UreC (alpha) subunits. Three heterotrimers associate to form the active enzyme.

Its subcellular location is the cytoplasm. It catalyses the reaction urea + 2 H2O + H(+) = hydrogencarbonate + 2 NH4(+). It participates in nitrogen metabolism; urea degradation; CO(2) and NH(3) from urea (urease route): step 1/1. In Haemophilus influenzae (strain 86-028NP), this protein is Urease subunit gamma.